A 242-amino-acid chain; its full sequence is Terpene cyclase dpfgB (242 aa).

A run of 7 helical transmembrane segments spans residues 15–37, 51–71, 75–95, 112–132, 141–161, 169–189, and 205–225; these read DVAW…NYVG, ALMA…IYPF, LEMY…YTAV, LPLI…ALAA, AWSA…QLLC, SYFL…QDIL, and LYIW…ICLW.

This sequence belongs to the paxB family.

Its subcellular location is the membrane. Its pathway is secondary metabolite biosynthesis; terpenoid biosynthesis. In terms of biological role, terpene cyclase; part of the gene cluster that mediates the biosynthesis of diterpenoid pyrones. The first step of the pathway is the synthesis of the alpha-pyrone moiety by the polyketide synthase dpfgA via condensation of one acetyl-CoA starter unit with 3 malonyl-CoA units and 2 methylations. The alpha-pyrone is then combined with geranylgeranyl pyrophosphate (GGPP) formed by the GGPP synthase dpfgD through the action of the prenyltransferase dpfgC to yield a linear alpha-pyrone diterpenoid. Subsequent steps in the diterpenoid pyrone biosynthetic pathway involve the decalin core formation, which is initiated by the epoxidation of the C10-C11 olefin by the FAD-dependent oxidoreductase dpfgE, and is followed by a cyclization cascade catalyzed by the terpene cyclase dpfgB. The short chain dehydrogenase/reductase dpfgG then oxidizes the 8S hydroxy group to a ketone and the short chain dehydrogenase/reductase dpfgH reduces the ketone to the 8R hydroxy group to yield higginsianin B. Higginsianin B is further methylated by the methyltransferase dpfgI to produce the intermediate named FDDP B. The cytochrome P450 monooxygenase dfgpJ then catalyzes a three-step oxidation at C-27 to generate a carboxylic acid as well as C-26 hydroxylation. Finally, methyltransferase dpfgK methylates the carboxylic acid generated by dpfgJ, yielding the final diterpenoid pyrones from the pathway which were named FDDP D and FDDP E. The chain is Terpene cyclase dpfgB from Gibberella zeae (strain ATCC MYA-4620 / CBS 123657 / FGSC 9075 / NRRL 31084 / PH-1) (Wheat head blight fungus).